We begin with the raw amino-acid sequence, 2672 residues long: eIF-2-alpha kinase activator GCN1 (2672 aa).

11 HEAT repeats span residues Leu5–Leu42, Asn79–Ser117, Cys174–Leu211, Gln227–Ser267, Phe329–Asn366, Glu372–Glu410, His509–Ile549, Lys611–Ile648, Ile706–Val745, Gln902–Ile932, and Ser933–Glu970. The stretch at Leu975–Ile994 is one HEAT 12; degenerate repeat. One copy of the HEAT 13; degenerate repeat lies at Pro995–Ala1030. HEAT repeat units lie at residues Pro1031–Phe1067, Val1099–Glu1138, Ser1185–Ile1224, Gln1243–Gln1281, Ala1284–Gln1321, Leu1363–Lys1401, Pro1405–Gly1442, Gly1444–Thr1480, Ala1484–Asn1521, Glu1523–Asp1559, Pro1561–Thr1598, Pro1603–Glu1640, Glu1641–Leu1679, Lys1681–Ser1717, Pro1721–Thr1758, Ala1760–Gly1796, Asp1825–Arg1862, Ala1863–Gly1903, Ala1905–Thr1942, Gln1947–Lys1984, Thr1985–Pro2024, Leu2026–Tyr2055, Arg2057–Asp2095, Glu2097–Leu2134, Val2138–Lys2175, Arg2206–Ala2243, Val2250–Met2286, Pro2290–Arg2328, Gly2347–Leu2384, Val2392–Lys2429, Gly2450–Glu2487, and Glu2506–Asp2546. An EF3-like region region spans residues Leu1330 to Glu1641. The RWDBD region stretch occupies residues Gly2207–Leu2356.

Belongs to the GCN1 family. Interacts (via N- and C-terminus) with GCN2 (via N-terminal RWD domain); this interaction stimulates GCN2 kinase activity in a GCN20-dependent manner in response to amino acid starvation. Interacts (via C-terminus) with GCN20 (via N-terminus); this interaction stimulates GCN2 kinase activity in response to amino acid starvation. The GCN1-GCN20 complex interacts with GCN2 on translating ribosomes in amino acid-starved cells; GCN1 may bind near the ribosomal A-site and promotes the transfer of uncharged tRNAs from the A-site to the tRNA-binding domain in GCN2 for its subsequent kinase activation, and hence allowing GCN4 translational activation and derepression of amino acid biosynthetic genes. Interacts (via C-terminus) with YIH1 (via N-terminus); this interaction reduces the GCN1-GCN20 complex formation and prevents the interaction of GCN1 with GCN2 and GCN2 kinase activation in amino acid-starved cells. Interacts with GIR2; this interaction prevents the interaction of GCN1 with GCN2 and GCN2 kinase activation in amino acid-starved cells. Interacts (via middle region) with RPS10A and RPS10B; these interactions are direct and promote GCN2 kinase activation. Associates (via N-terminus) with ribosomes; this association is stimulated in a ATP- and GCN20-dependent manner and is necessary to activate GCN2 kinase activity.

The protein localises to the cytoplasm. Its function is as follows. Ribosome collision sensor that activates a translation quality control pathway when a ribosome has stalled during translation. Directly binds to the ribosome and acts as a sentinel for colliding ribosomes. GCN1 also acts as a positive activator of the integrated stress response (ISR) by mediating activation of GCN2 in response to low amino acid, carbon, or purine availability. Component of the GCN1-GCN20 complex that forms a complex with GCN2 on translating ribosomes: during this process, GCN1 acts as a chaperone to facilitate delivery of uncharged tRNAs that enter the A-site of ribosomes to the tRNA-binding domain of GCN2, and hence stimulating GCN2 kinase activity, leading to phosphorylation of eukaryotic translation initiation factor 2 (eIF-2-alpha/SUI2). eIF-2-alpha/SUI2 phosphorylation converts eIF-2-alpha/SUI2 into a global protein synthesis inhibitor, leading to a global attenuation of cap-dependent translation, and thus to a reduced overall utilization of amino acids, while concomitantly initiating the preferential translation of ISR-specific mRNAs, such as the transcriptional activator GCN4, and hence allowing GCN4-mediated reprogramming of amino acid biosynthetic gene expression to alleviate nutrient depletion. The protein is eIF-2-alpha kinase activator GCN1 of Saccharomyces cerevisiae (strain ATCC 204508 / S288c) (Baker's yeast).